The primary structure comprises 427 residues: Steroid C26-monooxygenase (427 aa).

Position 360 (Cys360) interacts with heme.

The protein belongs to the cytochrome P450 family. The cofactor is heme.

The enzyme catalyses cholest-4-en-3-one + 6 reduced [2Fe-2S]-[ferredoxin] + 3 O2 + 5 H(+) = (25S)-3-oxocholest-4-en-26-oate + 6 oxidized [2Fe-2S]-[ferredoxin] + 4 H2O. It participates in steroid metabolism; cholesterol degradation. Its function is as follows. Involved in the utilization of cholesterol as the sole carbon and energy source by degrading the side chain. Primarily catalyzes the sequential oxidation of the terminal methyl of cholest-4-en-3-one into (25S)-26-hydroxycholest-4-en-3-one (alcohol), (25S)-26-oxocholest-4-en-3-one (aldehyde), to finally yield the carboxylic acid (25S)-3-oxocholest-4-en-26-oate. Also able to sequentially oxidize cholesterol itself, not only cholest-4-en-3-one. The protein is Steroid C26-monooxygenase of Mycolicibacterium smegmatis (strain ATCC 700084 / mc(2)155) (Mycobacterium smegmatis).